The sequence spans 293 residues: Glutamyl-Q tRNA(Asp) synthetase (293 aa).

Residues 8–12 and E44 contribute to the L-glutamate site; that span reads RFAPT. A 'HIGH' region motif is present at residues 11 to 21; it reads PTPSGYLHFGS. Zn(2+) contacts are provided by C100, C102, Y114, and C118. Positions 171 and 189 each coordinate L-glutamate. Positions 227-231 match the 'KMSKS' region motif; it reads KLGKS. K230 serves as a coordination point for ATP.

This sequence belongs to the class-I aminoacyl-tRNA synthetase family. GluQ subfamily. It depends on Zn(2+) as a cofactor.

In terms of biological role, catalyzes the tRNA-independent activation of glutamate in presence of ATP and the subsequent transfer of glutamate onto a tRNA(Asp). Glutamate is transferred on the 2-amino-5-(4,5-dihydroxy-2-cyclopenten-1-yl) moiety of the queuosine in the wobble position of the QUC anticodon. The polypeptide is Glutamyl-Q tRNA(Asp) synthetase (Pseudomonas aeruginosa (strain ATCC 15692 / DSM 22644 / CIP 104116 / JCM 14847 / LMG 12228 / 1C / PRS 101 / PAO1)).